We begin with the raw amino-acid sequence, 373 residues long: Mannitol-1-phosphate 5-dehydrogenase (373 aa).

An NAD(+)-binding site is contributed by 3–14 (ALHFGAGNIGRG).

It belongs to the mannitol dehydrogenase family.

It catalyses the reaction D-mannitol 1-phosphate + NAD(+) = beta-D-fructose 6-phosphate + NADH + H(+). The polypeptide is Mannitol-1-phosphate 5-dehydrogenase (Bacillus pumilus (strain SAFR-032)).